The chain runs to 480 residues: 6-phosphogluconate dehydrogenase, decarboxylating (480 aa).

NADP(+) is bound by residues 11–16, 34–36, 76–78, and Asn104; these read GLAVMG, NRS, and IKA. Residues Asn104 and 130–132 contribute to the substrate site; that span reads SGG. The active-site Proton acceptor is Lys184. 187 to 188 provides a ligand contact to substrate; it reads HN. Residue Glu191 is the Proton donor of the active site. Positions 192, 261, 288, 448, and 454 each coordinate substrate.

The protein belongs to the 6-phosphogluconate dehydrogenase family. In terms of assembly, homodimer.

The enzyme catalyses 6-phospho-D-gluconate + NADP(+) = D-ribulose 5-phosphate + CO2 + NADPH. It functions in the pathway carbohydrate degradation; pentose phosphate pathway; D-ribulose 5-phosphate from D-glucose 6-phosphate (oxidative stage): step 3/3. Functionally, catalyzes the oxidative decarboxylation of 6-phosphogluconate to ribulose 5-phosphate and CO(2), with concomitant reduction of NADP to NADPH. This chain is 6-phosphogluconate dehydrogenase, decarboxylating (gnd), found in Chlamydia trachomatis serovar D (strain ATCC VR-885 / DSM 19411 / UW-3/Cx).